The primary structure comprises 475 residues: Sensor histidine kinase GlrK (475 aa).

The Cytoplasmic portion of the chain corresponds to 1–13 (MKRWPVFPRSLRQ). The helical transmembrane segment at 14 to 34 (LVMLAFLLILLPLLVLAWQAW) threads the bilayer. The Periplasmic portion of the chain corresponds to 35–173 (QSLNALSDQA…LQREIAERGQ (139 aa)). The chain crosses the membrane as a helical span at residues 174 to 194 (YFGWQSLVLFLVSLVMVLLFT). Topologically, residues 195–475 (RMIIGPVKNI…IELPSSKNTK (281 aa)) are cytoplasmic. Residues 256 to 472 (HLSHELKTPL…CFRIELPSSK (217 aa)) enclose the Histidine kinase domain. His-259 is subject to Phosphohistidine; by autocatalysis.

Autophosphorylated.

It is found in the cell inner membrane. The catalysed reaction is ATP + protein L-histidine = ADP + protein N-phospho-L-histidine.. Member of the two-component regulatory system GlrR/GlrK that up-regulates transcription of the glmY sRNA when cells enter the stationary growth phase. Activates GlrR by phosphorylation. This Escherichia coli (strain K12) protein is Sensor histidine kinase GlrK (glrK).